A 71-amino-acid polypeptide reads, in one-letter code: Small ribosomal subunit protein bS21 (71 aa).

This sequence belongs to the bacterial ribosomal protein bS21 family.

This Acinetobacter baylyi (strain ATCC 33305 / BD413 / ADP1) protein is Small ribosomal subunit protein bS21.